Here is a 637-residue protein sequence, read N- to C-terminus: Sodium-dependent proline transporter (637 aa).

Residues 1–45 are Cytoplasmic-facing; the sequence is MKKLQEAHLRKPITPDLLMTPSDQGDVDLDVDFAADRGNWTGKLD. At Thr20 the chain carries Phosphothreonine. Ser22 bears the Phosphoserine mark. Helical transmembrane passes span 46 to 66, 74 to 93, and 117 to 137; these read FLLS…FPYR, AFLV…LFFL, and GAGA…NMII. The Extracellular segment spans residues 138–214; it reads AYVLFYLFAS…QGIGRPGEIR (77 aa). Asn182 carries N-linked (GlcNAc...) asparagine glycosylation. The next 9 membrane-spanning stretches (helical) occupy residues 215–233, 242–259, 295–312, 324–345, 378–397, 425–443, 459–479, 500–519, and 538–556; these read WNLC…LCIL, VVYF…MLLV, IFYS…FASY, FIVT…FSVL, LPLS…TLGL, VFSG…ILTT, SFGL…VYGI, ACWL…YSIV, and LGIL…GMLV. The Cytoplasmic segment spans residues 557–637; it reads AVLREEGSLW…IAEEEEESMM (81 aa). 2 positions are modified to phosphoserine: Ser573 and Ser582. Position 588 is a phosphothreonine (Thr588). At Tyr591 the chain carries Phosphotyrosine. Residues Ser598 and Ser600 each carry the phosphoserine modification.

This sequence belongs to the sodium:neurotransmitter symporter (SNF) (TC 2.A.22) family. SLC6A7 subfamily.

Its subcellular location is the synaptic cell membrane. It catalyses the reaction L-proline(out) + chloride(out) + 2 Na(+)(out) = L-proline(in) + chloride(in) + 2 Na(+)(in). The catalysed reaction is L-pipecolate(out) + chloride(out) + 2 Na(+)(out) = L-pipecolate(in) + chloride(in) + 2 Na(+)(in). In terms of biological role, brain specific sodium (and chloride)-dependent proline transporter. Terminates the action of proline by its high affinity sodium-dependent reuptake into presynaptic terminals. The protein is Sodium-dependent proline transporter of Mus musculus (Mouse).